Reading from the N-terminus, the 630-residue chain is tRNA uridine 5-carboxymethylaminomethyl modification enzyme MnmG (630 aa).

Position 13-18 (13-18 (GGGHAG)) interacts with FAD. Residue 273–287 (GPRYCPSIEDKIHRF) coordinates NAD(+).

This sequence belongs to the MnmG family. In terms of assembly, homodimer. Heterotetramer of two MnmE and two MnmG subunits. FAD serves as cofactor.

Its subcellular location is the cytoplasm. NAD-binding protein involved in the addition of a carboxymethylaminomethyl (cmnm) group at the wobble position (U34) of certain tRNAs, forming tRNA-cmnm(5)s(2)U34. This Pseudomonas aeruginosa (strain LESB58) protein is tRNA uridine 5-carboxymethylaminomethyl modification enzyme MnmG.